The following is a 129-amino-acid chain: Glycine cleavage system H protein (129 aa).

One can recognise a Lipoyl-binding domain in the interval 24-106 (TFTVGISEHA…YGDGWLFRIK (83 aa)). K65 carries the post-translational modification N6-lipoyllysine.

Belongs to the GcvH family. The glycine cleavage system is composed of four proteins: P, T, L and H. (R)-lipoate is required as a cofactor.

Functionally, the glycine cleavage system catalyzes the degradation of glycine. The H protein shuttles the methylamine group of glycine from the P protein to the T protein. This chain is Glycine cleavage system H protein, found in Pseudoalteromonas atlantica (strain T6c / ATCC BAA-1087).